A 404-amino-acid polypeptide reads, in one-letter code: F-box protein At2g17036 (404 aa).

In terms of domain architecture, F-box spans 2-50; it reads MDWATLPKDLLDLISKCLESSFDLIQFRSVCSSWRSAAGPKRLLWAHNL.

This Arabidopsis thaliana (Mouse-ear cress) protein is F-box protein At2g17036.